Consider the following 268-residue polypeptide: Ubiquinone biosynthesis protein COQ4 homolog, mitochondrial (268 aa).

The Zn(2+) site is built by His-171, Asp-172, His-175, and Glu-187.

The protein belongs to the COQ4 family. As to quaternary structure, component of a multi-subunit COQ enzyme complex. Requires Zn(2+) as cofactor.

Its subcellular location is the mitochondrion inner membrane. The catalysed reaction is a 4-hydroxy-3-methoxy-5-(all-trans-polyprenyl)benzoate + H(+) = a 2-methoxy-6-(all-trans-polyprenyl)phenol + CO2. It participates in cofactor biosynthesis; ubiquinone biosynthesis. Functionally, lyase that catalyzes the C1-decarboxylation of 4-hydroxy-3-methoxy-5-(all-trans-polyprenyl)benzoic acid into 2-methoxy-6-(all-trans-polyprenyl)phenol during ubiquinone biosynthesis. The sequence is that of Ubiquinone biosynthesis protein COQ4 homolog, mitochondrial from Drosophila melanogaster (Fruit fly).